The chain runs to 263 residues: Undecaprenyl-diphosphatase 2 (263 aa).

The next 8 helical transmembrane spans lie at 17 to 37 (TEFL…LIGF), 42 to 62 (AKVF…VIFW), 83 to 103 (LHII…HSAI), 106 to 126 (VLFG…LMIV), 142 to 162 (ITYK…WPGF), 183 to 203 (AEYT…LDLI), 216 to 236 (LFAT…VSFL), and 242 to 262 (VKLT…YFFI).

It belongs to the UppP family.

The protein localises to the cell membrane. It catalyses the reaction di-trans,octa-cis-undecaprenyl diphosphate + H2O = di-trans,octa-cis-undecaprenyl phosphate + phosphate + H(+). Catalyzes the dephosphorylation of undecaprenyl diphosphate (UPP). Confers resistance to bacitracin. The protein is Undecaprenyl-diphosphatase 2 of Bacillus anthracis.